An 837-amino-acid chain; its full sequence is AdoMet-dependent rRNA methyltransferase SPB1 (837 aa).

S-adenosyl-L-methionine-binding residues include Gly-58, Trp-60, Asp-78, Asp-94, and Asp-119. Catalysis depends on Lys-159, which acts as the Proton acceptor. Positions 345 to 390 (LNEEEQIEKELRDLQEKQKQKQKREKRRKNEEKQKELTRMQMNMLT) form a coiled coil. Disordered stretches follow at residues 359 to 381 (QEKQ…QKEL), 483 to 529 (FRAK…DEDD), 573 to 644 (TDDV…TTKE), and 779 to 808 (TKKQ…KGIK). Residues 372 to 381 (RKNEEKQKEL) are compositionally biased toward basic and acidic residues. The span at 518–529 (ESDDSELSDEDD) shows a compositional bias: acidic residues. Over residues 593 to 602 (SYNEMKKEDL) the composition is skewed to basic and acidic residues. A compositionally biased stretch (acidic residues) spans 603–635 (SDSSDEDSSSESDFEIVANDESDGDIDSDYDSD).

This sequence belongs to the class I-like SAM-binding methyltransferase superfamily. RNA methyltransferase RlmE family. SPB1 subfamily. Component of the nucleolar and nucleoplasmic pre-60S ribosomal particle.

The protein localises to the nucleus. Its subcellular location is the nucleolus. It carries out the reaction a ribonucleotide in rRNA + S-adenosyl-L-methionine = a 2'-O-methylribonucleotide in rRNA + S-adenosyl-L-homocysteine + H(+). In terms of biological role, required for proper assembly of pre-ribosomal particles during the biogenesis of the 60S ribosomal subunit. The sequence is that of AdoMet-dependent rRNA methyltransferase SPB1 from Candida glabrata (strain ATCC 2001 / BCRC 20586 / JCM 3761 / NBRC 0622 / NRRL Y-65 / CBS 138) (Yeast).